The primary structure comprises 747 residues: Heterogeneous nuclear ribonucleoprotein U-like protein 2 (747 aa).

In terms of domain architecture, SAP spans 3–37; sequence VKRLKVTELRSELQRRGLDSRGLKVDLAQRLQEAL. 2 disordered regions span residues 40-242 and 627-666; these read EMLE…EEED and EEAR…GQRR. Positions 73–97 are enriched in acidic residues; that stretch reads GDEEEDEEEEEEDEEALLEDEDEEP. Positions 115 to 125 are enriched in low complexity; sequence EAAAMEAAAEP. Residues 137–147 show a composition bias toward gly residues; that stretch reads GSGGVNGGEEQ. Residues 148 to 163 are compositionally biased toward basic and acidic residues; the sequence is GLGKREEDEPEERSGD. Ser-161 bears the Phosphoserine mark. A Phosphothreonine modification is found at Thr-165. Residues Ser-168, Ser-185, Ser-188, Ser-226, and Ser-228 each carry the phosphoserine modification. Residues 185–223 show a composition bias toward basic and acidic residues; it reads SEKSKPAGSDGERRGVKRQRDEKDEHGRAYYEFREEAYH. Positions 226–419 constitute a B30.2/SPRY domain; that stretch reads SKSPLPPEEE…VELNFGQKEE (194 aa). Residues 232–242 show a composition bias toward acidic residues; that stretch reads PEEEAKDEEED. Over residues 627 to 639 the composition is skewed to basic and acidic residues; that stretch reads EEARKLLPPSEKR. Residues 640–654 are compositionally biased toward basic residues; that stretch reads TNRRNNRNKRNRQNR. Residues Arg-656, Arg-684, Arg-738, and Arg-747 each carry the omega-N-methylarginine modification.

As to quaternary structure, binds to MLF1 and retains it in the nucleus.

Its subcellular location is the nucleus. In Homo sapiens (Human), this protein is Heterogeneous nuclear ribonucleoprotein U-like protein 2 (HNRNPUL2).